Reading from the N-terminus, the 83-residue chain is Snake venom metalloproteinase BnP1 (83 aa).

The Peptidase M12B domain maps to 8–83 (SYIELAVVAD…NPQCIINQPI (76 aa)). Glutamate 11, cysteine 77, and asparagine 80 together coordinate Ca(2+).

It belongs to the venom metalloproteinase (M12B) family. P-I subfamily. As to quaternary structure, monomer. Zn(2+) is required as a cofactor. In terms of tissue distribution, expressed by the venom gland.

It localises to the secreted. With respect to regulation, inhibited by EDTA. Functionally, this protein is a zinc protease from snake venom that is devoid of significant myotoxic and hemorrhagic activities. It hydrolyzes the Aalpha-chain and more slowly the Bbeta-chain of fibrin and fibrinogen, without affecting the gamma-chains. It induces cell detachment and a apoptosis (anoikis) in endothelial cells. This Bothrops pauloensis (Neuwied's lancehead) protein is Snake venom metalloproteinase BnP1.